Here is a 190-residue protein sequence, read N- to C-terminus: dTTP/UTP pyrophosphatase (190 aa).

The Proton acceptor role is filled by Asp69.

This sequence belongs to the Maf family. YhdE subfamily. The cofactor is a divalent metal cation.

It localises to the cytoplasm. The enzyme catalyses dTTP + H2O = dTMP + diphosphate + H(+). It catalyses the reaction UTP + H2O = UMP + diphosphate + H(+). Its function is as follows. Nucleoside triphosphate pyrophosphatase that hydrolyzes dTTP and UTP. May have a dual role in cell division arrest and in preventing the incorporation of modified nucleotides into cellular nucleic acids. In Sphingopyxis alaskensis (strain DSM 13593 / LMG 18877 / RB2256) (Sphingomonas alaskensis), this protein is dTTP/UTP pyrophosphatase.